A 271-amino-acid chain; its full sequence is Probable ribosomal RNA small subunit methyltransferase A (271 aa).

S-adenosyl-L-methionine is bound by residues Asn22, Leu24, Gly49, Glu70, Asp97, and Asn112.

It belongs to the class I-like SAM-binding methyltransferase superfamily. rRNA adenine N(6)-methyltransferase family. RsmA subfamily.

It is found in the cytoplasm. Specifically dimethylates two adjacent adenosines in the loop of a conserved hairpin near the 3'-end of 16S rRNA in the 30S particle. May play a critical role in biogenesis of 30S subunits. The protein is Probable ribosomal RNA small subunit methyltransferase A of Methanosphaera stadtmanae (strain ATCC 43021 / DSM 3091 / JCM 11832 / MCB-3).